The sequence spans 365 residues: Outer membrane porin protein LC (365 aa).

Residues 1-23 (MKKLTVAISAVAASVLMAMSAQA) form the signal peptide.

It belongs to the Gram-negative porin family. As to quaternary structure, homotrimer.

It is found in the host cell outer membrane. Functionally, forms pores that allow passive diffusion of small molecules across the host cell outer membrane. This Enterobacteria phage PA-2 (Bacteriophage PA-2) protein is Outer membrane porin protein LC (LC).